The sequence spans 354 residues: Ferrochelatase (354 aa).

Residues His-214 and Glu-295 each contribute to the Fe cation site.

The protein belongs to the ferrochelatase family.

The protein localises to the cytoplasm. The enzyme catalyses heme b + 2 H(+) = protoporphyrin IX + Fe(2+). It functions in the pathway porphyrin-containing compound metabolism; protoheme biosynthesis; protoheme from protoporphyrin-IX: step 1/1. In terms of biological role, catalyzes the ferrous insertion into protoporphyrin IX. The protein is Ferrochelatase of Burkholderia ambifaria (strain MC40-6).